The primary structure comprises 305 residues: Glycine--tRNA ligase alpha subunit (305 aa).

Belongs to the class-II aminoacyl-tRNA synthetase family. In terms of assembly, tetramer of two alpha and two beta subunits.

The protein resides in the cytoplasm. The catalysed reaction is tRNA(Gly) + glycine + ATP = glycyl-tRNA(Gly) + AMP + diphosphate. This is Glycine--tRNA ligase alpha subunit from Streptococcus pyogenes serotype M18 (strain MGAS8232).